The primary structure comprises 164 residues: ATP synthase subunit b (164 aa).

A helical membrane pass occupies residues L10 to Y30.

It belongs to the ATPase B chain family. As to quaternary structure, F-type ATPases have 2 components, F(1) - the catalytic core - and F(0) - the membrane proton channel. F(1) has five subunits: alpha(3), beta(3), gamma(1), delta(1), epsilon(1). F(0) has three main subunits: a(1), b(2) and c(10-14). The alpha and beta chains form an alternating ring which encloses part of the gamma chain. F(1) is attached to F(0) by a central stalk formed by the gamma and epsilon chains, while a peripheral stalk is formed by the delta and b chains.

Its subcellular location is the cell membrane. Its function is as follows. F(1)F(0) ATP synthase produces ATP from ADP in the presence of a proton or sodium gradient. F-type ATPases consist of two structural domains, F(1) containing the extramembraneous catalytic core and F(0) containing the membrane proton channel, linked together by a central stalk and a peripheral stalk. During catalysis, ATP synthesis in the catalytic domain of F(1) is coupled via a rotary mechanism of the central stalk subunits to proton translocation. Functionally, component of the F(0) channel, it forms part of the peripheral stalk, linking F(1) to F(0). In Herpetosiphon aurantiacus (strain ATCC 23779 / DSM 785 / 114-95), this protein is ATP synthase subunit b.